The following is a 1134-amino-acid chain: MHQMNTKMHFRFALALLMAFFSHDVLAKNLKYRIYEEQRVGSVIARLSEDVADVLLKLPNPSAVRFRAMPRGNSPLLVVNENTGEISIGAKIDREQLCQKNLNCSIEFDVLTLPTEHLQLFHIEVDVLDINDNSPQFSRPVIPIEISESAAVGTRIPLDSAFDPDVGENSLHTYSLSANDYFNIEVRTRTDGAKYAELIVVKELDRELKASYELQLTASDMGVPQRSGSSILKISISDSNDNSPAFEQPSYTIQLLENSPVGTLLLDLNATDPDEGANGRIVYSFSSHVSPKIIETFKIDSEKGHLTLFKPVDYEITKSYEIDVQAQDLGPNSIPAHCKIIIKVVDVNDNKPEISINLMSPGKEEVSYVFEGDPIDTFVAIVRVQDKDSGLNGEIICKLHGHGHFKLQKTYENNYLILTNATLDREKRSEYSLTVIAEDKGTPSLSSVRHFTVQINDINDNPPRFQRSRYEFVISENNSPGAYITTVTATDPDLGENGHVTYTILESFVLGSSITTYVTIDPSNGAIYALRIFDHEEVSQITFVVEARDGGSQKQLSSNTTVVLTIIDENDNVPVVIGPAMHNNTAEISIPKGAESGFHVTRIRVVDRDSGANAEFSCSIVSGNEENIFIMDPRSCDIHTNVSMESIPSAEWALSVIIQDKGSPPLHTKVLLRCMVFDYAESVTSTAMTSVSRASLDVSMIIIISLGAICAVLLVIMVLFATRCNREKKDTRSYNCRVAESTYQHHPKRPSRQIHKGDITLVPTINGTLPIRSHHRSSPSSSPTLERGQMGSRQSHNSHQSLNSLVTISSNHVPENFSLELTHATPAVEVSQLLSMLHQGQYQPRPSFRGNKYSRSYRYALQDMDKFSLKDSGRGDSEAGDSDYDLGRDSPIDRLLGEGFSDLFLTDGRIPAAMRLCTEECRVLGHSDQCWMPPLPSPSSDYRSNMFIPGEEFPAQPQQQHSHQGLDDDSQPAENGEKKKSFSTFGKDSPSDEDSGDSSTSSLLSEMSSVFQRLLPASLDTFSECNEGDRSNSLERRKGPAQGKTGGYPQGVAAWAASTHFQNPTSSSGTPLGTHSSVQPSSKWLPAMEEIPENYEEDDFDNVLNHLSDGKHELMDASELVAEINKLLQDVRQS.

An N-terminal signal peptide occupies residues 1–27; it reads MHQMNTKMHFRFALALLMAFFSHDVLA. Cadherin domains are found at residues 28 to 137, 138 to 246, 247 to 354, 361 to 465, 466 to 576, and 582 to 688; these read KNLK…SPQF, SRPV…SPAF, EQPS…KPEI, PGKE…PPRF, QRSR…VPVV, and HNNT…STAM. The Extracellular portion of the chain corresponds to 28–699; it reads KNLKYRIYEE…SVSRASLDVS (672 aa). Asn-103 carries N-linked (GlcNAc...) asparagine glycosylation. N-linked (GlcNAc...) asparagine glycosylation occurs at Asn-269. The N-linked (GlcNAc...) asparagine glycan is linked to Asn-559. The chain crosses the membrane as a helical span at residues 700-720; the sequence is MIIIISLGAICAVLLVIMVLF. Residues 721–1134 lie on the Cytoplasmic side of the membrane; that stretch reads ATRCNREKKD…NKLLQDVRQS (414 aa). Disordered regions lie at residues 769-800, 868-888, 941-1004, and 1022-1083; these read LPIRSHHRSSPSSSPTLERGQMGSRQSHNSHQ, SLKDSGRGDSEAGDSDYDLGR, DYRS…SSLL, and FSEC…PSSK. Over residues 791–800 the composition is skewed to polar residues; the sequence is GSRQSHNSHQ. The span at 868–877 shows a compositional bias: basic and acidic residues; it reads SLKDSGRGDS. The segment at 892–1134 is interaction with DAB1; the sequence is IDRLLGEGFS…NKLLQDVRQS (243 aa). A compositionally biased stretch (basic and acidic residues) spans 1027-1038; the sequence is EGDRSNSLERRK. Residues 1059 to 1082 show a composition bias toward polar residues; the sequence is THFQNPTSSSGTPLGTHSSVQPSS.

In terms of assembly, interacts with DAB1. In terms of tissue distribution, predominantly expressed in kidney and lung.

The protein localises to the cell membrane. Functionally, potential calcium-dependent cell-adhesion protein. The chain is Protocadherin 18 (Pcdh18) from Mus musculus (Mouse).